The primary structure comprises 89 residues: Large ribosomal subunit protein bL31B (89 aa).

It belongs to the bacterial ribosomal protein bL31 family. Type B subfamily. Part of the 50S ribosomal subunit.

This Aeromonas salmonicida (strain A449) protein is Large ribosomal subunit protein bL31B.